A 509-amino-acid chain; its full sequence is Ribonuclease Y (509 aa).

A helical membrane pass occupies residues 3–23; the sequence is WILYVILPAVCIILGWTIRWL. The KH domain maps to 199–284; it reads TVSTVSLPSD…EIVQKVTREI (86 aa). An HD domain is found at 325–418; sequence VLQHSKEVAI…VQIADAISAA (94 aa).

It belongs to the RNase Y family.

The protein localises to the cell membrane. Its function is as follows. Endoribonuclease that initiates mRNA decay. The protein is Ribonuclease Y of Treponema denticola (strain ATCC 35405 / DSM 14222 / CIP 103919 / JCM 8153 / KCTC 15104).